The chain runs to 609 residues: Glutamine--fructose-6-phosphate aminotransferase [isomerizing] (609 aa).

The Nucleophile; for GATase activity role is filled by Cys2. The 217-residue stretch at 2-218 folds into the Glutamine amidotransferase type-2 domain; that stretch reads CGIVGAIAQR…EGDIAEITRR (217 aa). SIS domains are found at residues 286–426 and 458–599; these read ADEL…LKGL and LAED…VDQP. Catalysis depends on Lys604, which acts as the For Fru-6P isomerization activity.

Homodimer.

The protein resides in the cytoplasm. The enzyme catalyses D-fructose 6-phosphate + L-glutamine = D-glucosamine 6-phosphate + L-glutamate. In terms of biological role, catalyzes the first step in hexosamine metabolism, converting fructose-6P into glucosamine-6P using glutamine as a nitrogen source. In Salmonella typhimurium (strain LT2 / SGSC1412 / ATCC 700720), this protein is Glutamine--fructose-6-phosphate aminotransferase [isomerizing].